The sequence spans 521 residues: Type-2 serine--tRNA ligase (521 aa).

Ala316 lines the L-serine pocket. Cys318 is a binding site for Zn(2+). L-serine is bound at residue Arg347. Residues 347-349 (RWE) and 358-359 (RV) contribute to the ATP site. 364–366 (RVE) contributes to the L-serine binding site. Residues Glu366 and Cys473 each contribute to the Zn(2+) site. Arg480 is an ATP binding site.

Belongs to the class-II aminoacyl-tRNA synthetase family. Type-2 seryl-tRNA synthetase subfamily. Homodimer. Requires Zn(2+) as cofactor.

The protein localises to the cytoplasm. The enzyme catalyses tRNA(Ser) + L-serine + ATP = L-seryl-tRNA(Ser) + AMP + diphosphate + H(+). It carries out the reaction tRNA(Sec) + L-serine + ATP = L-seryl-tRNA(Sec) + AMP + diphosphate + H(+). It participates in aminoacyl-tRNA biosynthesis; selenocysteinyl-tRNA(Sec) biosynthesis; L-seryl-tRNA(Sec) from L-serine and tRNA(Sec): step 1/1. Its function is as follows. Catalyzes the attachment of serine to tRNA(Ser). Is also able to aminoacylate tRNA(Sec) with serine, to form the misacylated tRNA L-seryl-tRNA(Sec), which will be further converted into selenocysteinyl-tRNA(Sec). In Methanocaldococcus jannaschii (strain ATCC 43067 / DSM 2661 / JAL-1 / JCM 10045 / NBRC 100440) (Methanococcus jannaschii), this protein is Type-2 serine--tRNA ligase (serS).